The chain runs to 825 residues: MEDASGSYPFGVATADGTPLQIDAENAAVRGINEWSWGSMSPGIPPAAFRPYSLPQFMDRPGPYPYQSSSSSSRELSGSAAKVAIPRTTSASSQSQRRRSARACEPCRQRKIKCDGSKPVCRQCIDHNVSCFFVDVKRVRDQKQLGLLGKKVEQYERLLQELEKEVDENAARRIRKVLRGTDISSPTDDGGDSDSSISSIGSLEALDLVEEDLNRSEKTVATGFFGKNSEVAWMQKLEDEAKSRNRKKEDSTDMEDGVAGGHTMTPPQKQETAMAAMSYYLDDIGIPLMDSVDPYALPPKDLANRFFTAFMDSVHPSFNVVRKTAFVSQYRQFFSQPAQPPQRWLAILNMIFAIGCRYTQATSGRPDSGDYNDLVYLNRARKLTLSENVIFEHADLQQIQVEFLVALYFVSKCQINRAFKFSSMAFRSAVSLGINLRFVDDRTQYPAKEARIRLWWSIFLLEHLLTAITGRVSCVGESLSATPLPIPYEEEAFGRPDVLPLLQDSSLRMTRLKLTLLQSDEESRADVSWLPSCEPSPSLYFHCIVDLATITQAIINKVYSIQGLRERASQVEQRIRRFSFNLDMWLSKVPEAYRFTSGSGDQLDLPSDRNAPWMRERISLAMSYYSSRLTLCRPCLTHTGLAPGDPSPDPAVPPSARQGSRRISSSRMQFNTAMALTCVRSARSLLCCIPETPDITWLTTMTPWWCILHYIMQATTTILLHLSSWPTRLPNDPMHQVSADIEATSRETKKALRWLHHMAYKYPAARRAFRQCNSIVRRITPSLGIDISDIPSGKDLPTEDDAYHLRDIDNTPSSRAGSMEFERHH.

The segment at 60–102 (RPGPYPYQSSSSSSRELSGSAAKVAIPRTTSASSQSQRRRSAR) is disordered. Residues 68–79 (SSSSSSRELSGS) are compositionally biased toward low complexity. A DNA-binding region (zn(2)-C6 fungal-type) is located at residues 104–131 (CEPCRQRKIKCDGSKPVCRQCIDHNVSC). Positions 239 to 251 (DEAKSRNRKKEDS) are enriched in basic and acidic residues. Disordered stretches follow at residues 239-267 (DEAK…MTPP), 642-663 (APGD…SRRI), and 804-825 (HLRD…ERHH).

The protein localises to the nucleus. In terms of biological role, transcription factor that negatively regulates the biosynthesis of ochratoxin A (OTA), a mycotoxin composed of a chlorinated type I polyketide dihydroisocoumarin moiety linked to L-phenylalanine, and demonstrated to have nephrotoxic, immunotoxic, genotoxic, neurotoxic, and teratogenic properties. Also regulates cellular redox homeostasis and sensitivity to H(2)O(2). Carbon sources such as sucrose, glucose and arabinose repress gal4, leading to up-regulation of OTA biosynthetic genes and altered cellular redox homeostasis. In Aspergillus niger (strain ATCC MYA-4892 / CBS 513.88 / FGSC A1513), this protein is Transcription regulator galc.